We begin with the raw amino-acid sequence, 398 residues long: Dual-specificity RNA methyltransferase RlmN (398 aa).

The Proton acceptor role is filled by E119. Positions E125–D364 constitute a Radical SAM core domain. C132 and C369 are oxidised to a cystine. 3 residues coordinate [4Fe-4S] cluster: C139, C143, and C146. S-adenosyl-L-methionine-binding positions include G193–E194, S225, S247–H249, and N326. C369 acts as the S-methylcysteine intermediate in catalysis.

The protein belongs to the radical SAM superfamily. RlmN family. It depends on [4Fe-4S] cluster as a cofactor.

It is found in the cytoplasm. It carries out the reaction adenosine(2503) in 23S rRNA + 2 reduced [2Fe-2S]-[ferredoxin] + 2 S-adenosyl-L-methionine = 2-methyladenosine(2503) in 23S rRNA + 5'-deoxyadenosine + L-methionine + 2 oxidized [2Fe-2S]-[ferredoxin] + S-adenosyl-L-homocysteine. The catalysed reaction is adenosine(37) in tRNA + 2 reduced [2Fe-2S]-[ferredoxin] + 2 S-adenosyl-L-methionine = 2-methyladenosine(37) in tRNA + 5'-deoxyadenosine + L-methionine + 2 oxidized [2Fe-2S]-[ferredoxin] + S-adenosyl-L-homocysteine. Specifically methylates position 2 of adenine 2503 in 23S rRNA and position 2 of adenine 37 in tRNAs. m2A2503 modification seems to play a crucial role in the proofreading step occurring at the peptidyl transferase center and thus would serve to optimize ribosomal fidelity. The sequence is that of Dual-specificity RNA methyltransferase RlmN from Pectobacterium atrosepticum (strain SCRI 1043 / ATCC BAA-672) (Erwinia carotovora subsp. atroseptica).